The sequence spans 201 residues: CASP-like protein 1E1 (201 aa).

The Cytoplasmic portion of the chain corresponds to Met-1–Gly-36. Residues Ile-37–Ala-57 form a helical membrane-spanning segment. Over Arg-58–Ala-87 the chain is Extracellular. A helical membrane pass occupies residues Tyr-88–Leu-108. Topologically, residues Ser-109–Asp-127 are cytoplasmic. The helical transmembrane segment at Leu-128–Ala-148 threads the bilayer. The Extracellular portion of the chain corresponds to Glu-149 to Asn-173. A helical transmembrane segment spans residues Ala-174–Met-194. Residues Ala-195 to Gln-201 lie on the Cytoplasmic side of the membrane.

This sequence belongs to the Casparian strip membrane proteins (CASP) family. In terms of assembly, homodimer and heterodimers.

It localises to the cell membrane. This is CASP-like protein 1E1 from Musa acuminata (Banana).